The chain runs to 475 residues: Ankyrin repeat, SAM and basic leucine zipper domain-containing protein 1 (475 aa).

The disordered stretch occupies residues 1–23 (MAAARFRGLAVAGGGESSESEDD). Phosphoserine is present on residues S17, S18, and S20. 6 ANK repeats span residues 45 to 74 (EKNETFKRALTAGDVALVEELLDSGISVDS), 78 to 107 (YGWTPLMYAASVSNVDLVRVLLDRGAKASF), 110 to 144 (DKQTILITACSARGSEEQILKCVELLLSRNADPNV), 148 to 177 (RLMTPIMYAARDGHPQVVALLVAHGAEVNT), 181 to 210 (NGYTALTWAARQGHKNVVLKLLELGANKML), and 214 to 243 (DGKTPSEIAKRNKHLEIFNFLSLTLNPLEG). The 63-residue stretch at 272 to 334 (SYTAFGDLEI…KILAALKELE (63 aa)) folds into the SAM domain.

In terms of assembly, interacts with DDX4, PIWIL1, RANBP9 and TDRD1.

The protein localises to the cytoplasm. Plays a central role during spermatogenesis by repressing transposable elements and preventing their mobilization, which is essential for the germline integrity. Acts via the piRNA metabolic process, which mediates the repression of transposable elements during meiosis by forming complexes composed of piRNAs and Piwi proteins and governs the methylation and subsequent repression of transposons. Its association with pi-bodies suggests a participation in the primary piRNAs metabolic process. Required prior to the pachytene stage to facilitate the production of multiple types of piRNAs, including those associated with repeats involved in the regulation of retrotransposons. May act by mediating protein-protein interactions during germ cell maturation. The sequence is that of Ankyrin repeat, SAM and basic leucine zipper domain-containing protein 1 (ASZ1) from Equus caballus (Horse).